A 327-amino-acid polypeptide reads, in one-letter code: uncharacterized protein (327 aa).

2 disordered regions span residues 127-170 (LSEF…GIYR) and 298-327 (NFED…LKRR). 3 positions are modified to phosphoserine: Ser-153, Ser-154, and Ser-309. The segment covering 317-327 (YRKRKKNLKRR) has biased composition (basic residues).

This is an uncharacterized protein from Schizosaccharomyces pombe (strain 972 / ATCC 24843) (Fission yeast).